The chain runs to 973 residues: ATP-dependent DNA helicase homolog RECG1, chloroplastic/mitochondrial (973 aa).

Residues M1–D208 are sufficient for chloroplastic and mitochondrial trgeting. The segment at L174–T200 is disordered. One can recognise a Helicase ATP-binding domain in the interval D536–I725. G549–T556 serves as a coordination point for ATP. The DEQQ box signature appears at D655–Q658. Residues G746–L904 form the Helicase C-terminal domain.

It belongs to the helicase family. RecG subfamily. As to expression, expressed in most tissues, not seen in pollen, ovules or developing seeds.

It is found in the plastid. The protein localises to the chloroplast. Its subcellular location is the mitochondrion. The enzyme catalyses Couples ATP hydrolysis with the unwinding of duplex DNA by translocating in the 3'-5' direction.. It carries out the reaction ATP + H2O = ADP + phosphate + H(+). In terms of biological role, plays a critical role in recombination and DNA repair. Helps process Holliday junction (HJ) intermediates to mature products by catalyzing branch migration. Has replication fork regression activity, unwinds stalled or blocked replication forks to make a HJ that can be resolved. Has a DNA unwinding activity characteristic of a DNA helicase with 3'-5' polarity. Its function is as follows. Plays a role in recombination surveillance and repair of double-stranded (ds)DNA breaks in the mitochondrion. May be able to dissociate D- and R-loops. Able to complement UV sensitivity of a recG deletion in E.coli. This chain is ATP-dependent DNA helicase homolog RECG1, chloroplastic/mitochondrial, found in Arabidopsis thaliana (Mouse-ear cress).